A 1238-amino-acid polypeptide reads, in one-letter code: uncharacterized protein (1238 aa).

Disordered stretches follow at residues 22 to 83 (LQSA…QEHL), 96 to 150 (SSRQ…IASP), 169 to 250 (FEPD…HQML), 264 to 694 (QLNS…AAMV), 739 to 915 (TKAA…SVPE), 936 to 955 (THSA…APHE), and 1057 to 1089 (PKIS…QCSS). Low complexity predominate over residues 35–49 (QPPNQQPHQTQQQQQ). Over residues 58–72 (PSIQNLTTNATPTST) the composition is skewed to polar residues. The segment covering 73-83 (QLQQQQQQEHL) has biased composition (low complexity). Polar residues predominate over residues 96 to 110 (SSRQNQGAPSGNLSN). Positions 125 to 145 (SVSGNTNHTGSNSSSNSGSNN) are enriched in low complexity. A compositionally biased stretch (polar residues) spans 188-204 (SASSASKLPTHNVQQQH). 3 stretches are compositionally biased toward low complexity: residues 272 to 287 (SYQH…QSHP), 309 to 334 (PLLT…SSQH), and 393 to 406 (SNEE…NSSN). Positions 433 to 450 (SKPQHPQQAANLNNSCSP) are enriched in polar residues. Serine 453 bears the Phosphoserine mark. A compositionally biased stretch (polar residues) spans 463-472 (PFSTQKQSQT). The span at 523–536 (TEQHRMQQDDEPPK) shows a compositional bias: basic and acidic residues. Composition is skewed to low complexity over residues 549-570 (QSNS…SQSS) and 632-641 (TTAAVAAPPA). Threonine 642 carries the phosphothreonine modification. The span at 678-688 (ERISSPEKPAE) shows a compositional bias: basic and acidic residues. Serine 682, serine 749, and serine 753 each carry phosphoserine. Over residues 755–764 (IPQSRSTSTP) the composition is skewed to polar residues. Serine 793 and serine 799 each carry phosphoserine. A compositionally biased stretch (low complexity) spans 832-860 (STSAAAAAALAARQLSEAASATKSKPAAG). Residues 861 to 874 (AKKKNAGVKGKKGS) show a composition bias toward basic residues. A compositionally biased stretch (basic and acidic residues) spans 937–947 (HSAEDVNEKQT). The span at 1071–1089 (DSSISYSDDPNESRSQCSS) shows a compositional bias: polar residues. Residues 1089-1131 (SVDLLDCSTESKFVETFRGMGKTSENGFEVWLHEDCAVWSNDI) form a C2HC pre-PHD-type; degenerate zinc finger. Residue serine 1099 is modified to Phosphoserine. A PHD-type zinc finger spans residues 1151-1199 (YQCVLCQQTGASICCFQRCCKAAAHVPCGRSANWSLSEEDRKVYCHLHR).

This is an uncharacterized protein from Drosophila melanogaster (Fruit fly).